The chain runs to 133 residues: Osteocrin (133 aa).

An N-terminal signal peptide occupies residues 1 to 27 (MLDWRLASAHFILAVTLTLWSSGKVLS). Residue Arg-132 is modified to Arginine amide.

The protein belongs to the Osteocrin family. As to quaternary structure, interacts with NPR3. As to expression, enriched in neocortical regions of the developing cerebral cortex. Not expressed in other compartments of the neocortical wall or in brain regions such as the hippocampus, striatum, mediodorsal nucleus of the thalamus and cerebellum. Also expressed in bone. In developing neonatal rib bone, present at high level in osteoblasts on bone-forming surfaces, in newly incorporated osteocytes and in some late hypertrophic chondrocytes (at protein level). In adult bone, localizes specifically to osteoblasts and young osteocytes at bone-forming sites (at protein level).

It is found in the secreted. In terms of biological role, hormone that acts as a regulator of dendritic growth in the developing cerebral cortex in response to sensory experience. Induced in the brain following membrane depolarization and inhibits dendritic branching in neurons of the developing cortex. Probably acts by binding to natriuretic peptide receptor NPR3/NPR-C, thereby preventing binding between NPR3/NPR-C and natriuretic peptides, leading to increase cGMP production. The chain is Osteocrin from Homo sapiens (Human).